The chain runs to 394 residues: S-adenosylmethionine synthase (394 aa).

H18 is an ATP binding site. D20 contributes to the Mg(2+) binding site. E46 is a K(+) binding site. Residues E59 and Q102 each coordinate L-methionine. Positions 102–112 (QSPDIDMGVSA) are flexible loop. ATP contacts are provided by residues 175–177 (DGK), D250, 256–257 (RK), A273, and K277. Residue D250 coordinates L-methionine. K281 is an L-methionine binding site.

The protein belongs to the AdoMet synthase family. As to quaternary structure, homotetramer; dimer of dimers. The cofactor is Mg(2+). K(+) is required as a cofactor.

It localises to the cytoplasm. The catalysed reaction is L-methionine + ATP + H2O = S-adenosyl-L-methionine + phosphate + diphosphate. The protein operates within amino-acid biosynthesis; S-adenosyl-L-methionine biosynthesis; S-adenosyl-L-methionine from L-methionine: step 1/1. Functionally, catalyzes the formation of S-adenosylmethionine (AdoMet) from methionine and ATP. The overall synthetic reaction is composed of two sequential steps, AdoMet formation and the subsequent tripolyphosphate hydrolysis which occurs prior to release of AdoMet from the enzyme. The sequence is that of S-adenosylmethionine synthase from Brachyspira hyodysenteriae (strain ATCC 49526 / WA1).